Consider the following 250-residue polypeptide: Ubiquinone/menaquinone biosynthesis C-methyltransferase UbiE (250 aa).

Residues threonine 73, aspartate 94, and 122–123 (DA) each bind S-adenosyl-L-methionine.

It belongs to the class I-like SAM-binding methyltransferase superfamily. MenG/UbiE family.

The enzyme catalyses a 2-demethylmenaquinol + S-adenosyl-L-methionine = a menaquinol + S-adenosyl-L-homocysteine + H(+). The catalysed reaction is a 2-methoxy-6-(all-trans-polyprenyl)benzene-1,4-diol + S-adenosyl-L-methionine = a 5-methoxy-2-methyl-3-(all-trans-polyprenyl)benzene-1,4-diol + S-adenosyl-L-homocysteine + H(+). It participates in quinol/quinone metabolism; menaquinone biosynthesis; menaquinol from 1,4-dihydroxy-2-naphthoate: step 2/2. It functions in the pathway cofactor biosynthesis; ubiquinone biosynthesis. Methyltransferase required for the conversion of demethylmenaquinol (DMKH2) to menaquinol (MKH2) and the conversion of 2-polyprenyl-6-methoxy-1,4-benzoquinol (DDMQH2) to 2-polyprenyl-3-methyl-6-methoxy-1,4-benzoquinol (DMQH2). This Coxiella burnetii (strain CbuK_Q154) (Coxiella burnetii (strain Q154)) protein is Ubiquinone/menaquinone biosynthesis C-methyltransferase UbiE.